A 123-amino-acid polypeptide reads, in one-letter code: Small ribosomal subunit protein eS8 (123 aa).

Residues 1–38 are disordered; it reads MKDQGRSPRKRTGGRRRPNHKKKKHELGKDTVETQVGE. The segment covering 7–26 has biased composition (basic residues); sequence SPRKRTGGRRRPNHKKKKHE.

As to quaternary structure, part of the 30S ribosomal subunit.

The sequence is that of Small ribosomal subunit protein eS8 (rps8e) from Haloarcula marismortui (strain ATCC 43049 / DSM 3752 / JCM 8966 / VKM B-1809) (Halobacterium marismortui).